We begin with the raw amino-acid sequence, 83 residues long: U25-theraphotoxin-Cg1b (83 aa).

An N-terminal signal peptide occupies residues 1–23 (MRFHTLLFLSFLLLVSCALICTA). A propeptide spanning residues 24–48 (QHPGLEKSGMFHENVGKGQHIEEKR) is cleaved from the precursor. Intrachain disulfides connect C50–C66, C57–C71, and C65–C79.

This sequence belongs to the neurotoxin 07 (Beta/delta-agtx) family. 03 (aga-4) subfamily. JZTX sub-subfamily. In terms of tissue distribution, expressed by the venom gland.

Its subcellular location is the secreted. In terms of biological role, probable ion channel inhibitor. This is U25-theraphotoxin-Cg1b from Chilobrachys guangxiensis (Chinese earth tiger tarantula).